The sequence spans 330 residues: tRNA U34 carboxymethyltransferase (330 aa).

Carboxy-S-adenosyl-L-methionine contacts are provided by residues lysine 91, tryptophan 105, lysine 110, glycine 130, 152 to 154, 181 to 182, methionine 196, tyrosine 200, and arginine 315; these read DPS and IE.

Belongs to the class I-like SAM-binding methyltransferase superfamily. CmoB family. Homotetramer.

It catalyses the reaction carboxy-S-adenosyl-L-methionine + 5-hydroxyuridine(34) in tRNA = 5-carboxymethoxyuridine(34) in tRNA + S-adenosyl-L-homocysteine + H(+). Catalyzes carboxymethyl transfer from carboxy-S-adenosyl-L-methionine (Cx-SAM) to 5-hydroxyuridine (ho5U) to form 5-carboxymethoxyuridine (cmo5U) at position 34 in tRNAs. In Shewanella woodyi (strain ATCC 51908 / MS32), this protein is tRNA U34 carboxymethyltransferase.